Consider the following 326-residue polypeptide: Acetyl-coenzyme A carboxylase carboxyl transferase subunit alpha (326 aa).

The CoA carboxyltransferase C-terminal domain occupies 45-298 (LEARAMQLRE…KQVLLENLDE (254 aa)).

It belongs to the AccA family. Acetyl-CoA carboxylase is a heterohexamer composed of biotin carboxyl carrier protein (AccB), biotin carboxylase (AccC) and two subunits each of ACCase subunit alpha (AccA) and ACCase subunit beta (AccD).

It localises to the cytoplasm. The enzyme catalyses N(6)-carboxybiotinyl-L-lysyl-[protein] + acetyl-CoA = N(6)-biotinyl-L-lysyl-[protein] + malonyl-CoA. The protein operates within lipid metabolism; malonyl-CoA biosynthesis; malonyl-CoA from acetyl-CoA: step 1/1. Functionally, component of the acetyl coenzyme A carboxylase (ACC) complex. First, biotin carboxylase catalyzes the carboxylation of biotin on its carrier protein (BCCP) and then the CO(2) group is transferred by the carboxyltransferase to acetyl-CoA to form malonyl-CoA. This chain is Acetyl-coenzyme A carboxylase carboxyl transferase subunit alpha, found in Nostoc punctiforme (strain ATCC 29133 / PCC 73102).